A 319-amino-acid chain; its full sequence is Protein quaking-B (319 aa).

The KH domain occupies 87–153; the sequence is YVPVKEYPDF…WEHLNEDLHV (67 aa). Residues 276 to 279 carry the SH3-binding motif; the sequence is PQTP.

It belongs to the quaking family. As to quaternary structure, homodimer; does not require RNA to homodimerize.

It is found in the cytoplasm. The protein localises to the nucleus. RNA reader protein, which recognizes and binds specific RNAs, thereby regulating RNA metabolic processes, such as pre-mRNA splicing, circular RNA (circRNA) formation, mRNA export, mRNA stability and/or translation. Involved in various cellular processes, such as mRNA storage into stress granules, apoptosis, interferon response, glial cell fate and development. Binds to the 5'-NACUAAY-N(1,20)-UAAY-3' RNA core sequence. Acts as a mRNA modification reader that specifically recognizes and binds mRNA transcripts modified by internal N(7)-methylguanine (m7G). Promotes the formation of circular RNAs (circRNAs): acts by binding to sites flanking circRNA-forming exons. CircRNAs are produced by back-splicing circularization of pre-mRNAs. Required to protect and promote stability of mRNAs which promotes oligodendrocyte differentiation. Acts as an important regulator of muscle development: required during early skeletal myofibril formation by regulating the accumulation of the muscle-specific tropomyosin-3 (tpm3) transcripts. This is Protein quaking-B (qki2) from Danio rerio (Zebrafish).